The chain runs to 86 residues: uncharacterized protein (86 aa).

It is found in the mitochondrion. This is an uncharacterized protein from Marchantia polymorpha (Common liverwort).